The chain runs to 64 residues: Defensin beta 4A (64 aa).

A signal peptide spans 1–23; sequence MRVLYLLFSFLFIFLMPLPGVFG. Cystine bridges form between cysteine 31–cysteine 60, cysteine 38–cysteine 53, and cysteine 43–cysteine 61. The phosphatidylinositol 4,5-bisphosphate (PIP2) binding stretch occupies residues 33–48; that stretch reads KNGAICHPVFCPRRYK.

The protein belongs to the beta-defensin family. LAP/TAP subfamily. As to quaternary structure, monomer. Homodimer.

It localises to the secreted. In terms of biological role, exhibits antimicrobial activity against Gram-negative bacteria and Gram-positive bacteria, with highest activity against Gram-negative bacteria. Antimicrobial activity against P.aruginosa seems to be salt-sensitive and is reduced with high salt concentrations greater than 25 mM. Also exhibits antimicrobial activity against the yeast C.albicans. Permeabilizes C.albicans cell membranes via targeting plasma membrane lipid phosphatidylinositol 4,5-bisphosphate (PIP2), thereby leading to cell fragmentation and cell death. Acts as a ligand for C-C chemokine receptor CCR6. Binds to CCR6 and induces chemotactic activity of CCR6-expressing cells, such as immature dendritic cells and memory T cells. In Macaca mulatta (Rhesus macaque), this protein is Defensin beta 4A (DEFB4A).